The chain runs to 483 residues: Dihydrolipoyllysine-residue acetyltransferase component of pyruvate dehydrogenase complex, mitochondrial (483 aa).

Residues 1–28 constitute a mitochondrion transit peptide; it reads MLSANMLRRMHHGVAVTRMLLVSNGKVQ. The Lipoyl-binding domain maps to 53-129; it reads HTVINMPALS…PVGKPLAVTV (77 aa). K94 carries the post-translational modification N6-lipoyllysine. 2 disordered regions span residues 143–187 and 234–254; these read IEDS…DRVF and EAAAKATTPAASAADAAAPGD. The segment covering 146-160 has biased composition (basic and acidic residues); it reads SSAKEPSAKSGEEKS. Over residues 161 to 178 the composition is skewed to polar residues; the sequence is APSSEKQSKETSSPSNVS. A Peripheral subunit-binding (PSBD) domain is found at 187-224; that stretch reads FASPLARKLAEEKDLDLSQIRGSGPNGRIIKVDIENFK. The span at 235–252 shows a compositional bias: low complexity; the sequence is AAAKATTPAASAADAAAP. Catalysis depends on residues H456 and D460.

It belongs to the 2-oxoacid dehydrogenase family. (R)-lipoate is required as a cofactor.

It localises to the mitochondrion matrix. The catalysed reaction is N(6)-[(R)-dihydrolipoyl]-L-lysyl-[protein] + acetyl-CoA = N(6)-[(R)-S(8)-acetyldihydrolipoyl]-L-lysyl-[protein] + CoA. In terms of biological role, the pyruvate dehydrogenase complex catalyzes the overall conversion of pyruvate to acetyl-CoA and CO(2). It contains multiple copies of three enzymatic components: pyruvate dehydrogenase (E1), dihydrolipoamide acetyltransferase (E2) and lipoamide dehydrogenase (E3). The protein is Dihydrolipoyllysine-residue acetyltransferase component of pyruvate dehydrogenase complex, mitochondrial of Schizosaccharomyces pombe (strain 972 / ATCC 24843) (Fission yeast).